Reading from the N-terminus, the 251-residue chain is 4-hydroxy-tetrahydrodipicolinate reductase (251 aa).

NAD(+)-binding positions include 8–13 (GAKGRM), 76–78 (GTT), and 106–109 (APNF). Histidine 136 serves as the catalytic Proton donor/acceptor. Histidine 137 contacts (S)-2,3,4,5-tetrahydrodipicolinate. Lysine 140 acts as the Proton donor in catalysis. A (S)-2,3,4,5-tetrahydrodipicolinate-binding site is contributed by 146–147 (GT).

Belongs to the DapB family.

The protein resides in the cytoplasm. It carries out the reaction (S)-2,3,4,5-tetrahydrodipicolinate + NAD(+) + H2O = (2S,4S)-4-hydroxy-2,3,4,5-tetrahydrodipicolinate + NADH + H(+). It catalyses the reaction (S)-2,3,4,5-tetrahydrodipicolinate + NADP(+) + H2O = (2S,4S)-4-hydroxy-2,3,4,5-tetrahydrodipicolinate + NADPH + H(+). The protein operates within amino-acid biosynthesis; L-lysine biosynthesis via DAP pathway; (S)-tetrahydrodipicolinate from L-aspartate: step 4/4. Catalyzes the conversion of 4-hydroxy-tetrahydrodipicolinate (HTPA) to tetrahydrodipicolinate. This chain is 4-hydroxy-tetrahydrodipicolinate reductase, found in Bifidobacterium longum (strain NCC 2705).